Reading from the N-terminus, the 441-residue chain is Damage-control phosphatase ARMT1 (441 aa).

Alanine 2 carries the N-acetylalanine modification. Lysine 40 carries the N6-acetyllysine modification. A Phosphoserine modification is found at serine 102. Residues aspartate 253 and asparagine 254 each coordinate Mn(2+). Position 253-254 (253-254 (DN)) interacts with substrate. Glutamate 258 and aspartate 291 together coordinate S-adenosyl-L-methionine. Aspartate 291 serves as a coordination point for Mn(2+). Substrate-binding positions include 367 to 371 (DLNYR) and lysine 404. Residues 401–404 (RTLK) carry the Subfamily III RTxK motif motif.

This sequence belongs to the damage-control phosphatase family. Sugar phosphate phosphatase III subfamily. The cofactor is Mn(2+). It depends on Ni(2+) as a cofactor. Post-translationally, automethylated.

It carries out the reaction beta-D-fructose 1-phosphate + H2O = D-fructose + phosphate. The catalysed reaction is beta-D-fructose 6-phosphate = dihydroxyacetone + D-glyceraldehyde 3-phosphate. It catalyses the reaction L-glutamyl-[protein] + S-adenosyl-L-methionine = [protein]-L-glutamate 5-O-methyl ester + S-adenosyl-L-homocysteine. Functionally, metal-dependent phosphatase that shows phosphatase activity against several substrates, including fructose-1-phosphate and fructose-6-phosphate. Its preference for fructose-1-phosphate, a strong glycating agent that causes DNA damage rather than a canonical yeast metabolite, suggests a damage-control function in hexose phosphate metabolism. Has also been shown to have O-methyltransferase activity that methylates glutamate residues of target proteins to form gamma-glutamyl methyl ester residues. Possibly methylates PCNA, suggesting it is involved in the DNA damage response. The protein is Damage-control phosphatase ARMT1 of Homo sapiens (Human).